The primary structure comprises 206 residues: Dephospho-CoA kinase (206 aa).

One can recognise a DPCK domain in the interval 4 to 200 (TVALTGGIGS…ASYLKLASQF (197 aa)). An ATP-binding site is contributed by 12-17 (GSGKST).

This sequence belongs to the CoaE family.

It localises to the cytoplasm. The catalysed reaction is 3'-dephospho-CoA + ATP = ADP + CoA + H(+). Its pathway is cofactor biosynthesis; coenzyme A biosynthesis; CoA from (R)-pantothenate: step 5/5. Its function is as follows. Catalyzes the phosphorylation of the 3'-hydroxyl group of dephosphocoenzyme A to form coenzyme A. This is Dephospho-CoA kinase from Salmonella choleraesuis (strain SC-B67).